The chain runs to 482 residues: Glutamate--tRNA ligase (482 aa).

The 'HIGH' region motif lies at 9 to 19 (PSPTGYLHIGG). Residues 252 to 256 (KLSKR) carry the 'KMSKS' region motif. Lys-255 serves as a coordination point for ATP.

Belongs to the class-I aminoacyl-tRNA synthetase family. Glutamate--tRNA ligase type 1 subfamily. In terms of assembly, monomer.

It is found in the cytoplasm. The catalysed reaction is tRNA(Glu) + L-glutamate + ATP = L-glutamyl-tRNA(Glu) + AMP + diphosphate. Functionally, catalyzes the attachment of glutamate to tRNA(Glu) in a two-step reaction: glutamate is first activated by ATP to form Glu-AMP and then transferred to the acceptor end of tRNA(Glu). The sequence is that of Glutamate--tRNA ligase from Ureaplasma urealyticum serovar 10 (strain ATCC 33699 / Western).